Here is a 351-residue protein sequence, read N- to C-terminus: UDP-3-O-acylglucosamine N-acyltransferase (351 aa).

The active-site Proton acceptor is histidine 257.

Belongs to the transferase hexapeptide repeat family. LpxD subfamily. Homotrimer.

The catalysed reaction is a UDP-3-O-[(3R)-3-hydroxyacyl]-alpha-D-glucosamine + a (3R)-hydroxyacyl-[ACP] = a UDP-2-N,3-O-bis[(3R)-3-hydroxyacyl]-alpha-D-glucosamine + holo-[ACP] + H(+). It participates in bacterial outer membrane biogenesis; LPS lipid A biosynthesis. Catalyzes the N-acylation of UDP-3-O-acylglucosamine using 3-hydroxyacyl-ACP as the acyl donor. Is involved in the biosynthesis of lipid A, a phosphorylated glycolipid that anchors the lipopolysaccharide to the outer membrane of the cell. The polypeptide is UDP-3-O-acylglucosamine N-acyltransferase (Brucella abortus (strain S19)).